The chain runs to 227 residues: Claudin-15 (227 aa).

A topological domain (cytoplasmic) is located at residue Met1. A helical transmembrane segment spans residues 2–24 (SIAVETFGFFMSALGLLMLGVTL). The Extracellular portion of the chain corresponds to 25–74 (PNSYWRVSTVHGNVITTNTIFENLWYSCATDSLGVSNCWDFPSMLALSGY). Cysteines 52 and 62 form a disulfide. A helical transmembrane segment spans residues 75 to 99 (VQGCRALMITAILLGFLGLFLGMVG). At 100 to 115 (LRCTNVGNIDLSRKAK) the chain is on the cytoplasmic side. Residue Ser111 is modified to Phosphoserine. The helical transmembrane segment at 116 to 140 (LLAIAGAFHILAGACGMVAISWYAV) threads the bilayer. The Extracellular segment spans residues 141–159 (NITTDFFNPLYVGTKYELG). An important for the formation of tight-junction strand-like structures region spans residues 146-147 (FF). Residues 160 to 182 (SALYLGWSASLLSILGGICVFST) traverse the membrane as a helical segment. At 183–227 (CCCDSKEDPATRVGLPYKPSTVVTARATSDESDVSFGKYGKNAYV) the chain is on the cytoplasmic side. 3 positions are modified to phosphoserine: Ser211, Ser214, and Ser217.

Belongs to the claudin family. As to quaternary structure, can form homo- and heteropolymeric tight junction strands. Palmitoylated. Detected in kidney, jejunum and colon (at protein level).

The protein localises to the cell junction. It localises to the tight junction. The protein resides in the cell membrane. The enzyme catalyses Na(+)(in) = Na(+)(out). It catalyses the reaction K(+)(in) = K(+)(out). The catalysed reaction is Cs(+)(in) = Cs(+)(out). It carries out the reaction Rb(+)(in) = Rb(+)(out). The enzyme catalyses Li(+)(in) = Li(+)(out). It catalyses the reaction NH4(+)(in) = NH4(+)(out). The catalysed reaction is methylamine(out) = methylamine(in). It carries out the reaction H2O(in) = H2O(out). Functionally, forms paracellular channels: polymerizes in tight junction strands with cation- and water-selective channels through the strands, conveying epithelial permeability in a process known as paracellular tight junction permeability. In intestinal epithelium, allows for sodium and water fluxes from the peritoneal side to the lumen of the intestine to regulate nutrient absorption and intestinal morphogenesis. This chain is Claudin-15, found in Rattus norvegicus (Rat).